Consider the following 3019-residue polypeptide: Genome polyprotein (3019 aa).

Position 2 is an N-acetylserine; by host (serine 2). The interval 2–23 is interaction with STAT1; the sequence is STLPKPQRITKRNINRRPQDVK. Residues 2–58 are interaction with EIF2AK2/PKR; sequence STLPKPQRITKRNINRRPQDVKFPGGGQIVGGVYVLPRRGPKLGVRAVRKTSERSQP. The tract at residues 2–59 is interaction with DDX3X; sequence STLPKPQRITKRNINRRPQDVKFPGGGQIVGGVYVLPRRGPKLGVRAVRKTSERSQPR. Positions 2–75 are disordered; sequence STLPKPQRIT…PRARRTEGRS (74 aa). The Cytoplasmic segment spans residues 2 to 168; sequence STLPKPQRIT…EDGINFATGN (167 aa). Short sequence motifs (nuclear localization signal) lie at residues 5 to 13 and 38 to 43; these read PKPQRITKR and PRRGPK. Phosphoserine; by host is present on serine 53. Short sequence motifs (nuclear localization signal) lie at residues 58 to 64 and 66 to 71; these read PRSRRQP and PRARRT. The segment covering 58 to 68 has biased composition (basic residues); that stretch reads PRSRRQPIPRA. Phosphoserine; by host occurs at positions 99 and 116. The segment at 112–152 is important for endoplasmic reticulum and mitochondrial localization; the sequence is PRRRSRNLGKVIDTLTCGFADLMGYIPLVGAPVGGVARALA. The tract at residues 122–173 is interaction with APOA2; the sequence is VIDTLTCGFADLMGYIPLVGAPVGGVARALAHGVRALEDGINFATGNLPGCS. The tract at residues 164 to 167 is important for lipid droplets localization; it reads FATG. The helical transmembrane segment at 169–189 threads the bilayer; it reads LPGCSFSIFLLALLSCLLTPT. The propeptide at 178–191 is ER anchor for the core protein, removed in mature form by host signal peptidase; it reads LLALLSCLLTPTAG. At 190–358 the chain is on the lumenal side; the sequence is AGLEYRNASG…IGAHWGVMAG (169 aa). Residues asparagine 196, asparagine 209, and asparagine 234 are each glycosylated (N-linked (GlcNAc...) asparagine; by host). The segment at 265-296 is important for fusion; that stretch reads MVGAATLCSALYVGDLCGALFLVGQGFSWRHR. A glycan (N-linked (GlcNAc...) asparagine; by host) is linked at asparagine 305. The helical transmembrane segment at 359–379 threads the bilayer; sequence VAYYSMQGNWAKVFLVLCLFS. The Lumenal segment spans residues 380 to 730; the sequence is GVDASTTITG…WEFVILIFLL (351 aa). The interval 385-412 is HVR1; it reads TTITGGVAASGAFTITSLFSTGAKQPLH. 3 N-linked (GlcNAc...) (high mannose) asparagine; by host glycosylation sites follow: asparagine 417, asparagine 423, and asparagine 430. Cystine bridges form between cysteine 429/cysteine 553, cysteine 452/cysteine 459, cysteine 487/cysteine 495, and cysteine 504/cysteine 509. A glycan (N-linked (GlcNAc...) asparagine; by host) is linked at asparagine 448. Residues 475 to 479 form an HVR2 region; sequence ANISG. An N-linked (GlcNAc...) asparagine; by host glycan is attached at asparagine 476. The CD81-binding 1 stretch occupies residues 481-494; that stretch reads SSEKPYCWHYAPRP. N-linked (GlcNAc...) asparagine; by host glycosylation is present at asparagine 533. The interval 545–552 is CD81-binding 2; it reads PPTEPWFG. N-linked (GlcNAc...) asparagine; by host glycosylation is present at asparagine 557. 4 disulfides stabilise this stretch: cysteine 565-cysteine 570, cysteine 586-cysteine 590, cysteine 602-cysteine 625, and cysteine 612-cysteine 649. Asparagine 628 and asparagine 650 each carry an N-linked (GlcNAc...) (high mannose) asparagine; by host glycan. A disulfide bridge connects residues cysteine 657 and cysteine 682. The segment at 665–676 is PKR/eIF2-alpha phosphorylation homology domain (PePHD); sequence SEMYPLLHSTTE. A helical membrane pass occupies residues 731-751; it reads LADARVCVVLWMMMLISQAEA. Residues 752–762 are Lumenal-facing; sequence ALENLIVLNAI. Residues 763-783 traverse the membrane as a helical segment; it reads SAAGTHGIWWSLVAFCVAWHV. Topologically, residues 784-786 are cytoplasmic; that stretch reads RGR. The helical transmembrane segment at 787–808 threads the bilayer; the sequence is IFPIAVYSIVGLWPLLLLVLML. The Lumenal portion of the chain corresponds to 809–818; the sequence is PYRAYAWTGT. The chain crosses the membrane as a helical span at residues 819 to 839; the sequence is DTSTLGAGVLSLFALFTLSPW. The Cytoplasmic portion of the chain corresponds to 840 to 843; it reads YKHW. The chain crosses the membrane as a helical span at residues 844-863; it reads IARLIWWNQYTIARCEAALQ. The Lumenal segment spans residues 864-886; it reads IWVPPLLARGARDGIILLAGLFY. Residues 887-907 form a helical membrane-spanning segment; the sequence is PALVFDITKLLLAILGPLYIL. Positions 908 to 1031 constitute a Peptidase C18 domain; sequence QASLVRVPYF…DYRSMGWRLL (124 aa). The Cytoplasmic segment spans residues 908–1662; it reads QASLVRVPYF…CMAADLEVAT (755 aa). The segment at 909–1211 is protease NS2-3; it reads ASLVRVPYFV…PVESLSAQTR (303 aa). Cysteine 927 carries S-palmitoyl cysteine; by host lipidation. The interval 934-954 is interaction with host SCPS1; it reads TGGKYVQMVLLALARGFNTYL. Residues histidine 957, glutamate 977, and cysteine 998 each act as for protease NS2 activity; shared with dimeric partner in the active site. One can recognise a Peptidase S29 domain in the interval 1032-1213; it reads APITAHAQQT…ESLSAQTRSP (182 aa). Residues histidine 1088 and aspartate 1112 each act as charge relay system; for serine protease NS3 activity in the active site. 2 residues coordinate Zn(2+): cysteine 1128 and cysteine 1130. Serine 1170 (charge relay system; for serine protease NS3 activity) is an active-site residue. Positions 1176 and 1180 each coordinate Zn(2+). Residue 1235–1242 coordinates ATP; sequence APTGSGES. Mg(2+)-binding residues include serine 1242 and glutamate 1322. A DECH box motif is present at residues 1321–1324; the sequence is DECH. The Helicase C-terminal domain occupies 1366-1543; the sequence is NIEEVALTGE…ELTPSETTVR (178 aa). Residues 1482–1505 are disordered; that stretch reads VPQDAVSRSQRRGRTGRGKSGTYR. Residues 1491 to 1503 are RNA-binding; that stretch reads QRRGRTGRGKSGT. The helical transmembrane segment at 1663 to 1683 threads the bilayer; the sequence is SAWVLLGGVMAALTAYCLSVG. The segment at 1684–1695 is NS3-binding; sequence SVVIVGHLVLGG. The Cytoplasmic portion of the chain corresponds to 1684-1810; that stretch reads SVVIVGHLVL…SVTSPLTTNQ (127 aa). The helical transmembrane segment at 1811 to 1829 threads the bilayer; it reads TLLFNIMGGWVASNLAPPP. The Lumenal portion of the chain corresponds to 1830 to 1833; the sequence is ASTA. The helical transmembrane segment at 1834-1854 threads the bilayer; sequence FVVSGLAGAAVGSIGLGKVLL. Aspartate 1855 is a topological domain (cytoplasmic). The helical transmembrane segment at 1856–1876 threads the bilayer; sequence ILAGYGAGVAGALVAFKIMGG. Topologically, residues 1877–1886 are lumenal; sequence EMPSTEDMVN. Residues 1887 to 1907 form a helical membrane-spanning segment; the sequence is LLPAILSPGALVVGVICAAIL. The Cytoplasmic segment spans residues 1908–1977; the sequence is RRHVGPGEGA…WINEDYPTPC (70 aa). Cysteine 1977 carries S-palmitoyl cysteine; by host lipidation. An intramembrane segment occupies 1978–2007; it reads DGNWLYDIWNWVCTVLADFKLWLGAKILPK. At 2008 to 2998 the chain is on the cytoplasmic side; it reads MPGIPFLSCQ…YHSVSRARSR (991 aa). 4 residues coordinate Zn(2+): cysteine 2016, cysteine 2034, cysteine 2036, and cysteine 2057. The interval 2125-2213 is FKBP8-binding; the sequence is EFFTELDGVR…ASSSASQLSA (89 aa). The segment at 2125–2337 is transcriptional activation; sequence EFFTELDGVR…PVPPPRRKRT (213 aa). An interaction with non-structural protein 4A region spans residues 2140-2144; that stretch reads PVCRP. The interval 2191 to 2225 is disordered; it reads AKRRLDRGSPPSLASSSASQLSAPSRKATCTTHGR. The interval 2194 to 2446 is interaction with host SKP2; sequence RLDRGSPPSL…ALITPCAAEE (253 aa). Phosphoserine; by host is present on residues serine 2199, serine 2202, serine 2206, serine 2209, serine 2212, and serine 2215. Low complexity predominate over residues 2199 to 2215; that stretch reads SPPSLASSSASQLSAPS. Positions 2215-2254 are ISDR; the sequence is SRKATCTTHGRHPDAELITANLLWRQEMGSNITRVESESK. Residues 2215 to 2280 form an interaction with EIF2AK2/PKR region; it reads SRKATCTTHG…DELSVAAECF (66 aa). Positions 2254–2311 are NS4B-binding; it reads KVVILDSFEPLRACDDEDELSVAAECFKKPPKYPPALPIWARPDYNPPLVEPWKDPDY. The segment at 2304–2382 is V3; that stretch reads EPWKDPDYVP…GTQSGSLTGP (79 aa). Residues 2327 to 2330 carry the SH3-binding motif; sequence PPVP. A Nuclear localization signal motif is present at residues 2332–2340; sequence PRRKRTIVL. Lysine 2355 is covalently cross-linked (Glycyl lysine isopeptide (Lys-Gly) (interchain with G-Cter in ubiquitin)). Residues 2356–2417 are disordered; sequence SFPQPTCSAE…PDLSSGSWST (62 aa). Over residues 2369–2381 the composition is skewed to polar residues; that stretch reads TSGVGTQSGSLTG. Residues serine 2457 and serine 2470 each carry the phosphoserine; by host modification. Residues 2642 to 2760 enclose the RdRp catalytic domain; the sequence is PLGFSYDTRC…IAESAGIDED (119 aa). Mg(2+) is bound by residues aspartate 2648, aspartate 2746, and aspartate 2747. The chain crosses the membrane as a helical span at residues 2999–3019; the sequence is HLLLGLLLLTVGVGIFLLPAR.

Belongs to the hepacivirus polyprotein family. As to quaternary structure, homooligomer. Interacts with E1 (via C-terminus). Interacts with the non-structural protein 5A. Interacts (via N-terminus) with host STAT1 (via SH2 domain); this interaction results in decreased STAT1 phosphorylation and ubiquitin-mediated proteasome-dependent STAT1 degradation, leading to decreased IFN-stimulated gene transcription. Interacts with host STAT3; this interaction constitutively activates STAT3. Interacts with host LTBR receptor. Interacts with host TNFRSF1A receptor and possibly induces apoptosis. Interacts with host HNRPK. Interacts with host YWHAE. Interacts with host UBE3A/E6AP. Interacts with host DDX3X. Interacts with host APOA2. Interacts with host RXRA protein. Interacts with host SP110 isoform 3/Sp110b; this interaction sequesters the transcriptional corepressor SP110 away from the nucleus. Interacts with host CREB3 nuclear transcription protein; this interaction triggers cell transformation. Interacts with host ACY3. Interacts with host C1QR1. Interacts with host RBM24; this interaction, which enhances the interaction of the mature core protein with 5'-UTR, may inhibit viral translation and favor replication. Interacts with host EIF2AK2/PKR; this interaction induces the autophosphorylation of EIF2AK2. Part of the viral assembly initiation complex composed of NS2, E1, E2, NS3, NS4A, NS5A and the mature core protein. In terms of assembly, forms a heterodimer with envelope glycoprotein E2. Interacts with mature core protein. Interacts with protease NS2. The heterodimer E1/E2 interacts with host CLDN1; this interaction plays a role in viral entry into host cell. Interacts with host SPSB2 (via C-terminus). Part of the viral assembly initiation complex composed of NS2, E1, E2, NS3, NS4A, NS5A and the mature core protein. Interacts with host NEURL3; this interaction prevents E1 binding to glycoprotein E2. Forms a heterodimer with envelope glycoprotein E1. Interacts with host CD81 and SCARB1 receptors; these interactions play a role in viral entry into host cell. Interacts with host EIF2AK2/PKR; this interaction inhibits EIF2AK2 and probably allows the virus to evade the innate immune response. Interacts with host CD209/DC-SIGN and CLEC4M/DC-SIGNR. Interact with host SPCS1; this interaction is essential for viral particle assembly. Interacts with protease NS2. The heterodimer E1/E2 interacts with host CLDN1; this interaction plays a role in viral entry into host cell. Part of the viral assembly initiation complex composed of NS2, E1, E2, NS3, NS4A, NS5A and the mature core protein. Interacts with host SLC3A2/4F2hc; the interaction may facilitate viral entry into host cell. Interacts with human PLSCR1. As to quaternary structure, homohexamer. Homoheptamer. Interacts with protease NS2. In terms of assembly, homodimer. Interacts with host SPCS1; this interaction is essential for viral particle assembly. Interacts with envelope glycoprotein E1. Interacts with envelope glycoprotein E2. Interacts with viroporin p7. Interacts with serine protease/helicase NS3. Part of the replication complex composed of NS2, NS3, NS4A, NS4B, NS5A and the RNA-directed RNA polymerase embedded in an ER-derived membranous web. Part of the viral assembly initiation complex composed of NS2, E1, E2, NS3, NS4A, NS5A and the mature core protein. Interacts with protease NS2. Interacts with non-structural protein 4A; this interaction stabilizes the folding of NS3 serine protease. NS3-NS4A interaction is essential for NS3 activation and allows membrane anchorage of the latter. NS3/NS4A complex also prevents phosphorylation of host IRF3, thus preventing the establishment of dsRNA induced antiviral state. Interacts with host MAVS; this interaction leads to the cleavage and inhibition of host MAVS. Interacts with host TICAM1; this interaction leads to the cleavage and inhibition of host TICAM1. Interacts with host TANK-binding kinase/TBK1; this interaction results in the inhibition of the association between TBK1 and IRF3, which leads to the inhibition of IRF3 activation. Interacts with host RBM24. Part of the replication complex composed of NS2, NS3, NS4A, NS4B, NS5A and the RNA-directed RNA polymerase embedded in an ER-derived membranous web. Part of the viral assembly initiation complex composed of NS2, E1, E2, NS3, NS4A, NS5A and the mature core protein. As to quaternary structure, interacts with NS3 serine protease; this interaction stabilizes the folding of NS3 serine protease. NS3-NS4A interaction is essential for NS3 activation and allows membrane anchorage of the latter. Interacts with non-structural protein 5A (via N-terminus). Part of the replication complex composed of NS2, NS3, NS4A, NS4B, NS5A and the RNA-directed RNA polymerase embedded in an ER-derived membranous web. Part of the viral assembly initiation complex composed of NS2, E1, E2, NS3, NS4A, NS5A and the mature core protein. In terms of assembly, homomultimer. Interacts with non-structural protein NS5A. Interacts with host PLA2G4C; this interaction likely initiates the recruitment of replication complexes to lipid droplets. Interacts with host STING; this interaction disrupts the interaction between STING and TBK1 thereby suppressing the interferon signaling. Part of the replication complex composed of NS2, NS3, NS4A, NS4B, NS5A and the RNA-directed RNA polymerase embedded in an ER-derived membranous web. Monomer. Homodimer; dimerization is required for RNA-binding. Interacts with the mature core protein. Interacts (via N-terminus) with non-structural protein 4A. Interacts with non-structural protein 4B. Interacts (via region D2) with RNA-directed RNA polymerase. Part of the viral assembly initiation complex composed of NS2, E1, E2, NS3, NS4A, NS5A and the mature core protein. Part of the replication complex composed of NS2, NS3, NS4A, NS4B, NS5A and the RNA-directed RNA polymerase embedded in an ER-derived membranous web. Interacts with host GRB2. Interacts with host BIN1. Interacts with host PIK3R1. Interacts with host SRCAP. Interacts with host FKBP8. Interacts (via C-terminus) with host VAPB (via MSP domain). Interacts with host EIF2AK2/PKR; this interaction leads to disruption of EIF2AK2 dimerization by NS5A and probably allows the virus to evade the innate immune response. Interacts (via N-terminus) with host PACSIN2 (via N-terminus); this interaction attenuates protein kinase C alpha-mediated phosphorylation of PACSIN2 by disrupting the interaction between PACSIN2 and PRKCA. Interacts (via N-terminus) with host SRC kinase (via SH2 domain). Interacts with most Src-family kinases. Interacts with host IFI27 and SKP2; promotes the ubiquitin-mediated proteasomal degradation of NS5A. Interacts with host GPS2. Interacts with host TNFRSF21; this interaction allows the modulation by the virus of JNK, p38 MAPK, STAT3, and Akt signaling pathways in a DR6-dependent manner. Interacts (via N-terminus) with host CIDEB (via N-terminus); this interaction seems to regulate the association of HCV particles with APOE. Interacts with host CHKA/Choline Kinase-alpha; CHKA bridges host PI4KA and NS5A and potentiates NS5A-stimulated PI4KA activity, which then facilitates the targeting of the ternary complex to the ER for viral replication. Interacts with host SPSB2 (via C-terminus); this interaction targets NS5A for ubiquitination and degradation. Interacts with host RAB18; this interaction may promote the association of NS5A and other replicase components with lipid droplets. Interacts (via region D2) with host PPIA/CYPA; the interaction stimulates RNA-binding ability of NS5A and is dependent on the peptidyl-prolyl cis-trans isomerase activity of PPIA/CYPA. Interacts with host TRIM14; this interaction induces the degradation of NS5A. As to quaternary structure, homooligomer. Interacts with non-structural protein 5A. Interacts with host VAPB. Interacts with host PRK2/PKN2. Interacts with host HNRNPA1 and SEPT6; these interactions facilitate viral replication. Part of the replication complex composed of NS2, NS3, NS4A, NS4B, NS5A and the RNA-directed RNA polymerase. Zn(2+) serves as cofactor. The cofactor is Mg(2+). Specific enzymatic cleavages in vivo yield mature proteins. The structural proteins, core, E1, E2 and p7 are produced by proteolytic processing by host signal peptidases. The core protein precursor is synthesized as a 23 kDa, which is retained in the ER membrane through the hydrophobic signal peptide. Cleavage by the signal peptidase releases the 21 kDa mature core protein. The cleavage of the core protein precursor occurs between aminoacids 176 and 188 but the exact cleavage site is not known. Some degraded forms of the core protein appear as well during the course of infection. The other proteins (p7, NS2, NS3, NS4A, NS4B, NS5A and NS5B) are cleaved by the viral proteases. Autoprocessing between NS2 and NS3 is mediated by the NS2 cysteine protease catalytic domain and regulated by the NS3 N-terminal domain. Post-translationally, phosphorylated by host PKC and PKA. In terms of processing, ubiquitinated; mediated by UBE3A and leading to core protein subsequent proteasomal degradation. Highly N-glycosylated. Post-translationally, palmitoylation is required for NS2/3 autoprocessing and E2 recruitment to membranes. In terms of processing, palmitoylated. This modification may play a role in its polymerization or in protein-protein interactions. Phosphorylated on serines in a basal form termed p56. p58 is a hyperphosphorylated form of p56. p56 and p58 coexist in the cell in roughly equivalent amounts. Hyperphosphorylation is dependent on the presence of NS4A. Host CSNK1A1/CKI-alpha or RPS6KB1 kinases may be responsible for NS5A phosphorylation. Post-translationally, tyrosine phosphorylation is essential for the interaction with host SRC. In terms of processing, ubiquitinated. Ubiquitination, most probably at Lys-2355, mediated by host IFI27 and SKP2 leads to proteasomal degradation, restricting viral infection. Ubiquitination by host TRIM22 leads to interruption of viral replication. The N-terminus is phosphorylated by host PRK2/PKN2.

It is found in the host endoplasmic reticulum membrane. The protein resides in the host mitochondrion membrane. Its subcellular location is the virion. It localises to the host cytoplasm. The protein localises to the host nucleus. It is found in the host lipid droplet. The protein resides in the virion membrane. Its subcellular location is the host mitochondrion. It localises to the host cell membrane. The protein localises to the host perinuclear region. It carries out the reaction Hydrolysis of four peptide bonds in the viral precursor polyprotein, commonly with Asp or Glu in the P6 position, Cys or Thr in P1 and Ser or Ala in P1'.. The enzyme catalyses a ribonucleoside 5'-triphosphate + H2O = a ribonucleoside 5'-diphosphate + phosphate + H(+). The catalysed reaction is ATP + H2O = ADP + phosphate + H(+). It catalyses the reaction RNA(n) + a ribonucleoside 5'-triphosphate = RNA(n+1) + diphosphate. With respect to regulation, inhibited by the antiviral drug hexamethylene amiloride. Inhibition by amantadine appears to be genotype-dependent. Also inhibited by long-alkyl-chain iminosugar derivatives. Activity is up-regulated by PRK2/PKN2-mediated phosphorylation. Functionally, packages viral RNA to form a viral nucleocapsid, and promotes virion budding. Participates in the viral particle production as a result of its interaction with the non-structural protein 5A. Binds RNA and may function as a RNA chaperone to induce the RNA structural rearrangements taking place during virus replication. Modulates viral translation initiation by interacting with viral IRES and 40S ribosomal subunit. Affects various cell signaling pathways, host immunity and lipid metabolism. Prevents the establishment of cellular antiviral state by blocking the interferon-alpha/beta (IFN-alpha/beta) and IFN-gamma signaling pathways and by blocking the formation of phosphorylated STAT1 and promoting ubiquitin-mediated proteasome-dependent degradation of STAT1. Activates STAT3 leading to cellular transformation. Regulates the activity of cellular genes, including c-myc and c-fos. May repress the promoter of p53, and sequester CREB3 and SP110 isoform 3/Sp110b in the cytoplasm. Represses cell cycle negative regulating factor CDKN1A, thereby interrupting an important check point of normal cell cycle regulation. Targets transcription factors involved in the regulation of inflammatory responses and in the immune response: suppresses TNF-induced NF-kappa-B activation, and activates AP-1. Binds to dendritic cells (DCs) via C1QR1, resulting in down-regulation of T-lymphocytes proliferation. Alters lipid metabolism by interacting with hepatocellular proteins involved in lipid accumulation and storage. Induces up-regulation of FAS promoter activity, and thereby contributes to the increased triglyceride accumulation in hepatocytes (steatosis). Its function is as follows. Forms a heterodimer with envelope glycoprotein E2, which mediates virus attachment to the host cell, virion internalization through clathrin-dependent endocytosis and fusion with host membrane. Fusion with the host cell is most likely mediated by both E1 and E2, through conformational rearrangements of the heterodimer required for fusion rather than a classical class II fusion mechanism. E1/E2 heterodimer binds host apolipoproteins such as APOB and ApoE thereby forming a lipo-viro-particle (LVP). APOE associated to the LVP allows the initial virus attachment to cell surface receptors such as the heparan sulfate proteoglycans (HSPGs), syndecan-1 (SDC1), syndecan-1 (SDC2), the low-density lipoprotein receptor (LDLR) and scavenger receptor class B type I (SCARB1). The cholesterol transfer activity of SCARB1 allows E2 exposure and binding of E2 to SCARB1 and the tetraspanin CD81. E1/E2 heterodimer binding on CD81 activates the epithelial growth factor receptor (EGFR) signaling pathway. Diffusion of the complex E1-E2-EGFR-SCARB1-CD81 to the cell lateral membrane allows further interaction with Claudin 1 (CLDN1) and occludin (OCLN) to finally trigger HCV entry. Forms a heterodimer with envelope glycoprotein E1, which mediates virus attachment to the host cell, virion internalization through clathrin-dependent endocytosis and fusion with host membrane. Fusion with the host cell is most likely mediated by both E1 and E2, through conformational rearrangements of the heterodimer required for fusion rather than a classical class II fusion mechanism. The interaction between envelope glycoprotein E2 and host apolipoprotein E/APOE allows the proper assembly, maturation and infectivity of the viral particles. This interaction is probably promoted via the up-regulation of cellular autophagy by the virus. E1/E2 heterodimer binds host apolipoproteins such as APOB and APOE thereby forming a lipo-viro-particle (LVP). APOE associated to the LVP allows the initial virus attachment to cell surface receptors such as the heparan sulfate proteoglycans (HSPGs), syndecan-1 (SDC1), syndecan-1 (SDC2), the low-density lipoprotein receptor (LDLR) and scavenger receptor class B type I (SCARB1). The cholesterol transfer activity of SCARB1 allows E2 exposure and binding of E2 to SCARB1 and the tetraspanin CD81. E1/E2 heterodimer binding on CD81 activates the epithelial growth factor receptor (EGFR) signaling pathway. Diffusion of the complex E1-E2-EGFR-SCARB1-CD81 to the cell lateral membrane allows further interaction with Claudin 1 (CLDN1) and occludin (OCLN) to finally trigger HCV entry. Inhibits host EIF2AK2/PKR activation, preventing the establishment of an antiviral state. Viral ligand for CD209/DC-SIGN and CLEC4M/DC-SIGNR, which are respectively found on dendritic cells (DCs), and on liver sinusoidal endothelial cells and macrophage-like cells of lymph node sinuses. These interactions allow the capture of circulating HCV particles by these cells and subsequent facilitated transmission to permissive cells such as hepatocytes and lymphocyte subpopulations. The interaction between E2 and host amino acid transporter complex formed by SLC3A2 and SLC7A5/LAT1 may facilitate viral entry into host cell. In terms of biological role, ion channel protein that acts as a viroporin and plays an essential role in the assembly, envelopment and secretion of viral particles. Regulates the host cell secretory pathway, which induces the intracellular retention of viral glycoproteins and favors assembly of viral particles. Creates a pore in acidic organelles and releases Ca(2+) and H(+) in the cytoplasm of infected cells, leading to a productive viral infection. High levels of cytoplasmic Ca(2+) may trigger membrane trafficking and transport of viral ER-associated proteins to viroplasms, sites of viral genome replication. This ionic imbalance induces the assembly of the inflammasome complex, which triggers the maturation of pro-IL-1beta into IL-1beta through the action of caspase-1. Targets also host mitochondria and induces mitochondrial depolarization. In addition of its role as a viroporin, acts as a lipid raft adhesion factor. Functionally, cysteine protease required for the proteolytic auto-cleavage between the non-structural proteins NS2 and NS3. The N-terminus of NS3 is required for the function of NS2 protease (active region NS2-3). Promotes the initiation of viral particle assembly by mediating the interaction between structural and non-structural proteins. Its function is as follows. Displays three enzymatic activities: serine protease with a chymotrypsin-like fold, NTPase and RNA helicase. NS3 serine protease, in association with NS4A, is responsible for the cleavages of NS3-NS4A, NS4A-NS4B, NS4B-NS5A and NS5A-NS5B. The NS3/NS4A complex prevents phosphorylation of host IRF3, thus preventing the establishment of dsRNA induced antiviral state. The NS3/NS4A complex induces host amino acid transporter component SLC3A2, thus contributing to HCV propagation. NS3 RNA helicase binds to RNA and unwinds both dsDNA and dsRNA in the 3' to 5' direction, and likely resolves RNA complicated stable secondary structures in the template strand. Binds a single ATP and catalyzes the unzipping of a single base pair of dsRNA. Inhibits host antiviral proteins TBK1 and IRF3 thereby preventing the establishment of an antiviral state. Cleaves host MAVS/CARDIF thereby preventing the establishment of an antiviral state. Cleaves host TICAM1/TRIF, thereby disrupting TLR3 signaling and preventing the establishment of an antiviral state. Induces a specific membrane alteration that serves as a scaffold for the virus replication complex. This membrane alteration gives rise to the so-called ER-derived membranous web that contains the replication complex. NS4B self-interaction contributes to its function in membranous web formation. Promotes host TRIF protein degradation in a CASP8-dependent manner thereby inhibiting host TLR3-mediated interferon signaling. Disrupts the interaction between STING and TBK1 contributing to the inhibition of interferon signaling. In terms of biological role, phosphorylated protein that is indispensable for viral replication and assembly. Both hypo- and hyperphosphorylated states are required for the viral life cycle. The hyperphosphorylated form of NS5A is an inhibitor of viral replication. Involved in RNA-binding and especially in binding to the viral genome. Zinc is essential for RNA-binding. Participates in the viral particle production as a result of its interaction with the mature viral core protein. Its interaction with host VAPB may target the viral replication complex to vesicles. Down-regulates viral IRES translation initiation. Mediates interferon resistance, presumably by interacting with and inhibiting host EIF2AK2/PKR. Prevents BIN1-induced apoptosis. Acts as a transcriptional activator of some host genes important for viral replication when localized in the nucleus. Via the interaction with host PACSIN2, modulates lipid droplet formation in order to promote virion assembly. Modulates TNFRSF21/DR6 signaling pathway for viral propagation. Functionally, RNA-dependent RNA polymerase that performs primer-template recognition and RNA synthesis during viral replication. Initiates RNA transcription/replication at a flavin adenine dinucleotide (FAD), resulting in a 5'- FAD cap on viral RNAs. In this way, recognition of viral 5' RNA by host pattern recognition receptors can be bypassed, thereby evading activation of antiviral pathways. This is Genome polyprotein from Homo sapiens (Human).